The sequence spans 72 residues: DNA-directed RNA polymerase subunit epsilon (72 aa).

The protein belongs to the RNA polymerase subunit epsilon family. In terms of assembly, RNAP is composed of a core of 2 alpha, a beta and a beta' subunit. The core is associated with a delta subunit, and at least one of epsilon or omega. When a sigma factor is associated with the core the holoenzyme is formed, which can initiate transcription.

It carries out the reaction RNA(n) + a ribonucleoside 5'-triphosphate = RNA(n+1) + diphosphate. In terms of biological role, a non-essential component of RNA polymerase (RNAP). This chain is DNA-directed RNA polymerase subunit epsilon, found in Staphylococcus haemolyticus (strain JCSC1435).